Consider the following 444-residue polypeptide: Methylenetetrahydrofolate--tRNA-(uracil-5-)-methyltransferase TrmFO (444 aa).

Residue Gly10–Gly15 participates in FAD binding.

Belongs to the MnmG family. TrmFO subfamily. FAD serves as cofactor.

Its subcellular location is the cytoplasm. The enzyme catalyses uridine(54) in tRNA + (6R)-5,10-methylene-5,6,7,8-tetrahydrofolate + NADH + H(+) = 5-methyluridine(54) in tRNA + (6S)-5,6,7,8-tetrahydrofolate + NAD(+). It catalyses the reaction uridine(54) in tRNA + (6R)-5,10-methylene-5,6,7,8-tetrahydrofolate + NADPH + H(+) = 5-methyluridine(54) in tRNA + (6S)-5,6,7,8-tetrahydrofolate + NADP(+). In terms of biological role, catalyzes the folate-dependent formation of 5-methyl-uridine at position 54 (M-5-U54) in all tRNAs. This Streptococcus pneumoniae serotype 2 (strain D39 / NCTC 7466) protein is Methylenetetrahydrofolate--tRNA-(uracil-5-)-methyltransferase TrmFO.